Consider the following 172-residue polypeptide: 3-hydroxydecanoyl-[acyl-carrier-protein] dehydratase (172 aa).

H71 is an active-site residue.

Belongs to the thioester dehydratase family. FabA subfamily. Homodimer.

It is found in the cytoplasm. It catalyses the reaction a (3R)-hydroxyacyl-[ACP] = a (2E)-enoyl-[ACP] + H2O. It carries out the reaction (3R)-hydroxydecanoyl-[ACP] = (2E)-decenoyl-[ACP] + H2O. The catalysed reaction is (2E)-decenoyl-[ACP] = (3Z)-decenoyl-[ACP]. It functions in the pathway lipid metabolism; fatty acid biosynthesis. Its function is as follows. Necessary for the introduction of cis unsaturation into fatty acids. Catalyzes the dehydration of (3R)-3-hydroxydecanoyl-ACP to E-(2)-decenoyl-ACP and then its isomerization to Z-(3)-decenoyl-ACP. Can catalyze the dehydratase reaction for beta-hydroxyacyl-ACPs with saturated chain lengths up to 16:0, being most active on intermediate chain length. The protein is 3-hydroxydecanoyl-[acyl-carrier-protein] dehydratase of Escherichia coli O6:K15:H31 (strain 536 / UPEC).